A 188-amino-acid chain; its full sequence is uncharacterized protein (188 aa).

Residues 133 to 153 (PKGRPTMKLQYPKMPPKPKTR) form a disordered region.

The protein belongs to the IS150/IS1296 orfA family.

This is an uncharacterized protein from Haemophilus influenzae (strain ATCC 51907 / DSM 11121 / KW20 / Rd).